Reading from the N-terminus, the 145-residue chain is MSILLSPPSLLLLLAALVAPATSTTNYRPDWNRLRGLARGRVETCGGUQLNRLKEVKAFVTEDIQLYHNLVMKHLPGADPELVLLSRNYQELERIPLSQMTRDEINALVQELGFYRKSAPEAQVPPEYLWAPAKPPEEASEHDDL.

A signal peptide spans 1 to 23; sequence MSILLSPPSLLLLLAALVAPATS. Active-site nucleophile residues include Cys45 and Sec48. Positions 45–48 form a cross-link, cysteinyl-selenocysteine (Cys-Sec); the sequence is CGGU. Position 48 (Sec48) is a non-standard amino acid, selenocysteine. The tract at residues 125-145 is disordered; it reads PPEYLWAPAKPPEEASEHDDL.

This sequence belongs to the selenoprotein M/F family. In terms of tissue distribution, widely expressed. Highly expressed in brain.

It is found in the cytoplasm. It localises to the perinuclear region. The protein localises to the endoplasmic reticulum. The protein resides in the golgi apparatus. Functionally, may function as a thiol-disulfide oxidoreductase that participates in disulfide bond formation. This chain is Selenoprotein M, found in Mus musculus (Mouse).